We begin with the raw amino-acid sequence, 452 residues long: MEIRQIFEQHSGLLDKEVEILGRVRSNRQGKFVSFMILNDGTTFTDLQVVYKTKGYEQALQARVSSIVKVVGRVVLTPEKQQKFEVQADEIELIDQAIEDYPLQKKEHTTEYLREIAHLRAKTKTFNAIFKIRSAAAYAIHRFFNEKNFVYIHSPIITSNDAEGAGEAFLVTTREDADYEKDFFGKKASLTVSGQLHAEAFAQAFKKVYTFGPTFRAENSNTAKHAAEFWMIEPEVAFADLKDNIQLIQDMVKYIINYIFKHNRRELEFCNEQLENGLIDKLNNVRNSEFKVTTYTEAIEILKQAVKDGHKFEVSDIEFGLDLGTEHERYICEQVNKAPTFVTNYPKEIKAFYMKQNDDNKTVAAVDLLVPGIGELVGGSQREDNYEKLIKRCKEVNIDIDQLEWYNNLRLYGYYKSAGFGLGFERLVMYITGASNIRDVIPFPRTPKNLLF.

The protein belongs to the class-II aminoacyl-tRNA synthetase family. As to quaternary structure, homodimer.

It is found in the cytoplasm. The enzyme catalyses tRNA(Asn) + L-asparagine + ATP = L-asparaginyl-tRNA(Asn) + AMP + diphosphate + H(+). The protein is Asparagine--tRNA ligase of Mycoplasma mycoides subsp. mycoides SC (strain CCUG 32753 / NCTC 10114 / PG1).